The following is a 231-amino-acid chain: uncharacterized protein (231 aa).

This is an uncharacterized protein from Haemophilus influenzae (strain ATCC 51907 / DSM 11121 / KW20 / Rd).